We begin with the raw amino-acid sequence, 676 residues long: WD repeat-containing protein 48 (676 aa).

Tyr28 is modified (phosphotyrosine). 8 WD repeats span residues 28-67 (YNRN…QDPY), 73-112 (HHTD…CMST), 115-154 (THKD…ALTA), 166-205 (GNKD…KLMK), 208-247 (GHTD…CIAT), 250-289 (VHDE…IRVL), 292-334 (EEKA…NFRA), and 358-397 (KGGA…KVED). Lys214 is subject to N6-acetyllysine. Lys578 carries the N6-acetyllysine modification. The disordered stretch occupies residues 607-628 (LDNESQTTSSSNNEKPEQEKEE). Positions 609–619 (NESQTTSSSNN) are enriched in low complexity. Thr613 carries the phosphothreonine modification.

The protein belongs to the WD repeat WDR48 family. Interacts with USP46. Interacts with USP1. Interacts with USP12. Component of the USP12-WDR20-WDR48 deubiquitinating complex. Component of the USP12-DMWD-WDR48 deubiquitinating complex. Interacts with PHLPP1. Interacts with RAD51AP1; the interaction is direct and promotes formation of a trimeric complex with RAD51 via RAD51AP1. Interacts with ATAD5; the interaction regulates USP1-mediated PCNA deubiquitination. Interacts with RAD51; the interaction is enhanced under replication stress. Interacts with ITCH; the interaction is more efficient when both USP12 and WDR48/UAF1 are involved and may facilitate recruitment of the USP12 deubiquitinating complex to Notch.

Its subcellular location is the nucleus. The protein resides in the cytoplasm. The protein localises to the lysosome. It is found in the late endosome. In terms of biological role, regulator of deubiquitinating complexes, which acts as a strong activator of USP1, USP12 and USP46. Enhances the USP1-mediated deubiquitination of FANCD2; USP1 being almost inactive by itself. Activates deubiquitination by increasing the catalytic turnover without increasing the affinity of deubiquitinating enzymes for the substrate. Also activates deubiquitinating activity of complexes containing USP12. Docks at the distal end of the USP12 fingers domain and induces a cascade of structural changes leading to the activation of the enzyme. Together with RAD51AP1, promotes DNA repair by stimulating RAD51-mediated homologous recombination. Binds single-stranded DNA (ssDNA) and double-stranded DNA (dsDNA). DNA-binding is required both for USP1-mediated deubiquitination of FANCD2 and stimulation of RAD51-mediated homologous recombination: both WDR48/UAF1 and RAD51AP1 have coordinated role in DNA-binding during these processes. Together with ATAD5 and by regulating USP1 activity, has a role in PCNA-mediated translesion synthesis (TLS) by deubiquitinating monoubiquitinated PCNA. Together with ATAD5, has a role in recruiting RAD51 to stalled forks during replication stress. This is WD repeat-containing protein 48 (Wdr48) from Mus musculus (Mouse).